Consider the following 422-residue polypeptide: MPAGEQEREYNEDRKYYSKGVKLVRKKKKIPGYSWGDIKINIIGEKDDSPIHFCDKCDLPIKIYGRIIPCKHAFCYNCANLYDKIGYKICPRCSYPVLRIEEHKRGSVFMCSVVQGCKRTYLSQKSLQAHIKRRHKRARKQVASASLEKLRPHIAPPRTEIAEIPKRLLDRDHLNYIPPEQHTMMSLPSMQQMPHEQHNQPHKDLQVPPPELSPSPPFPIQWETVSVFTRKHGNLIVDHIQNNSDSGAKKPSPPDYYPEYQSQPVVSSPCHIMPQKQHYAPPPSPSSPVNYPMPYPPQDVGTPNLVSSQAPALTTTYDLSLGYIIAQVPPYMNSPPPCAPQSQNGNSSASEFAFHHYNPNFLTQFTENQETLSPQFTQTDATDHRRWPAWKGLPPPPPTWSPPPSTLHGGSHHSYQRRHRPY.

Residues 54–94 form an RING-type zinc finger; it reads CDKCDLPIKIYGRIIPCKHAFCYNCANLYDKIGYKICPRCS. The HYB domain stretch occupies residues 93–151; that stretch reads CSYPVLRIEEHKRGSVFMCSVVQGCKRTYLSQKSLQAHIKRRHKRARKQVASASLEKLR. The C2H2-type zinc finger occupies 109–135; that stretch reads FMCSVVQGCKRTYLSQKSLQAHIKRRH. 2 disordered regions span residues 190–213 and 378–422; these read MQQM…PELS and QTDA…HRPY. Basic and acidic residues predominate over residues 195–205; the sequence is HEQHNQPHKDL. Residues 393-405 are compositionally biased toward pro residues; it reads LPPPPPTWSPPPS. A compositionally biased stretch (basic residues) spans 410–422; the sequence is GSHHSYQRRHRPY.

Homodimer.

The protein localises to the cytoplasm. The enzyme catalyses S-ubiquitinyl-[E2 ubiquitin-conjugating enzyme]-L-cysteine + [acceptor protein]-L-lysine = [E2 ubiquitin-conjugating enzyme]-L-cysteine + N(6)-ubiquitinyl-[acceptor protein]-L-lysine.. Its pathway is protein modification; protein ubiquitination. Its function is as follows. E3 ubiquitin ligase catalyzing the covalent attachment of ubiquitin moieties onto substrate proteins. May operate on tyrosine-phosphorylated SRC substrates. This is E3 ubiquitin-protein ligase CBLL2 (CBLL2) from Macaca fascicularis (Crab-eating macaque).